The following is a 361-amino-acid chain: AT-hook motif nuclear-localized protein 12 (361 aa).

Disordered regions lie at residues 29-143 and 286-361; these read SQVA…GRKQ and NNKT…LTRG. Polar residues predominate over residues 48 to 59; it reads SNPNIHHPQANN. Over residues 85–95 the composition is skewed to pro residues; it reads QPPPPPPPPEE. A Bipartite nuclear localization signal motif is present at residues 99 to 107; sequence KRKRGRPRK. 2 DNA-binding regions (a.T hook) span residues 99–111 and 130–142; these read KRKRGRPRKYGEP and KRARGRPPGTGRK. The PPC domain occupies 154–297; it reads TSAGLAFAPH…KTIRQEKEPN (144 aa). Residues 306 to 322 are compositionally biased toward low complexity; sequence ETTPGSAAEPAASAGQQ.

Homodimer. Interacts with AHL27, AHL29 and ATAF2/NAC081.

It localises to the nucleus. Its function is as follows. Transcription factor that specifically binds AT-rich DNA sequences related to the nuclear matrix attachment regions (MARs). The protein is AT-hook motif nuclear-localized protein 12 of Arabidopsis thaliana (Mouse-ear cress).